The sequence spans 289 residues: ATP synthase gamma chain (289 aa).

Belongs to the ATPase gamma chain family. In terms of assembly, F-type ATPases have 2 components, CF(1) - the catalytic core - and CF(0) - the membrane proton channel. CF(1) has five subunits: alpha(3), beta(3), gamma(1), delta(1), epsilon(1). CF(0) has three main subunits: a, b and c.

The protein resides in the cell inner membrane. Produces ATP from ADP in the presence of a proton gradient across the membrane. The gamma chain is believed to be important in regulating ATPase activity and the flow of protons through the CF(0) complex. This Polynucleobacter necessarius subsp. necessarius (strain STIR1) protein is ATP synthase gamma chain.